Here is a 386-residue protein sequence, read N- to C-terminus: S-adenosylmethionine synthase (386 aa).

E8 contacts Mg(2+). H14 contributes to the ATP binding site. Residue E42 coordinates K(+). The L-methionine site is built by E55 and Q98. ATP-binding positions include 166 to 168 (DGK), 234 to 237 (SGRF), D245, 251 to 252 (RK), A268, K272, and K276. D245 lines the L-methionine pocket. K276 is a binding site for L-methionine.

It belongs to the AdoMet synthase family. As to quaternary structure, homotetramer. Mn(2+) is required as a cofactor. Mg(2+) serves as cofactor. The cofactor is Co(2+). Requires K(+) as cofactor.

The protein resides in the cytoplasm. It catalyses the reaction L-methionine + ATP + H2O = S-adenosyl-L-methionine + phosphate + diphosphate. It functions in the pathway amino-acid biosynthesis; S-adenosyl-L-methionine biosynthesis; S-adenosyl-L-methionine from L-methionine: step 1/1. Functionally, catalyzes the formation of S-adenosylmethionine from methionine and ATP. The reaction comprises two steps that are both catalyzed by the same enzyme: formation of S-adenosylmethionine (AdoMet) and triphosphate, and subsequent hydrolysis of the triphosphate. This chain is S-adenosylmethionine synthase (METK), found in Ostreococcus tauri.